The following is a 252-amino-acid chain: Type III pantothenate kinase (252 aa).

6–13 (DIGNTSTA) contributes to the ATP binding site. 104 to 107 (GADR) lines the substrate pocket. Residue D106 is the Proton acceptor of the active site. D128 provides a ligand contact to K(+). Position 131 (T131) interacts with ATP. T183 contributes to the substrate binding site.

It belongs to the type III pantothenate kinase family. As to quaternary structure, homodimer. It depends on NH4(+) as a cofactor. Requires K(+) as cofactor.

It is found in the cytoplasm. The catalysed reaction is (R)-pantothenate + ATP = (R)-4'-phosphopantothenate + ADP + H(+). Its pathway is cofactor biosynthesis; coenzyme A biosynthesis; CoA from (R)-pantothenate: step 1/5. Functionally, catalyzes the phosphorylation of pantothenate (Pan), the first step in CoA biosynthesis. This Thermus thermophilus (strain ATCC BAA-163 / DSM 7039 / HB27) protein is Type III pantothenate kinase.